The sequence spans 44 residues: MIELDKSNFEEEVLKAEGTVLVDFWSPSCEPCKALMPHVHDFEE.

The 43-residue stretch at 2–44 folds into the Thioredoxin domain; it reads IELDKSNFEEEVLKAEGTVLVDFWSPSCEPCKALMPHVHDFEE. Cys-29 and Cys-32 are disulfide-bonded.

It belongs to the thioredoxin family.

In terms of biological role, participates in various redox reactions through the reversible oxidation of its active center dithiol to a disulfide and catalyzes dithiol-disulfide exchange reactions. This is Thioredoxin (trxA) from Tissierella creatinophila.